A 299-amino-acid chain; its full sequence is ATP phosphoribosyltransferase (299 aa).

Belongs to the ATP phosphoribosyltransferase family. Long subfamily. Mg(2+) serves as cofactor.

Its subcellular location is the cytoplasm. It carries out the reaction 1-(5-phospho-beta-D-ribosyl)-ATP + diphosphate = 5-phospho-alpha-D-ribose 1-diphosphate + ATP. Its pathway is amino-acid biosynthesis; L-histidine biosynthesis; L-histidine from 5-phospho-alpha-D-ribose 1-diphosphate: step 1/9. Its activity is regulated as follows. Feedback inhibited by histidine. Catalyzes the condensation of ATP and 5-phosphoribose 1-diphosphate to form N'-(5'-phosphoribosyl)-ATP (PR-ATP). Has a crucial role in the pathway because the rate of histidine biosynthesis seems to be controlled primarily by regulation of HisG enzymatic activity. The protein is ATP phosphoribosyltransferase of Actinobacillus pleuropneumoniae serotype 5b (strain L20).